Consider the following 573-residue polypeptide: Ribonuclease J (573 aa).

The tract at residues 1–29 (MENQERKPRRRRRRRPQEGSQGGPQDHVE) is disordered. 6 residues coordinate Zn(2+): His93, His95, Asp97, His98, His168, and Asp190. Substrate contacts are provided by residues 259–261 (ASH) and 390–394 (HASGH). His416 is a binding site for Zn(2+).

The protein belongs to the metallo-beta-lactamase superfamily. RNA-metabolizing metallo-beta-lactamase-like family. Bacterial RNase J subfamily. In terms of assembly, homodimer. May be a subunit of the RNA degradosome. The cofactor is Zn(2+).

The protein resides in the cytoplasm. In terms of biological role, an RNase that has endonuclease and possibly 5'-3' exonuclease activity. Probably involved in maturation of rRNA and in some organisms also mRNA maturation and/or decay. This chain is Ribonuclease J, found in Thermus thermophilus (strain ATCC BAA-163 / DSM 7039 / HB27).